We begin with the raw amino-acid sequence, 404 residues long: Probable RNA polymerase sigma-C factor (404 aa).

The short motif at 193–206 (DLIQEGTLGLERAV) is the Polymerase core binding element. The segment at residues 362–381 (LSEIGRILNLSRERVRQIEA) is a DNA-binding region (H-T-H motif).

Belongs to the sigma-70 factor family.

In terms of biological role, sigma factors are initiation factors that promote the attachment of RNA polymerase to specific initiation sites and are then released. The chain is Probable RNA polymerase sigma-C factor (sigC) from Synechocystis sp. (strain ATCC 27184 / PCC 6803 / Kazusa).